Reading from the N-terminus, the 365-residue chain is uncharacterized protein (365 aa).

The stretch at 18–46 forms a coiled coil; that stretch reads TAQEALTLIEKLDSDYKEKEEKITALSVH.

This is an uncharacterized protein from Bacillus subtilis (strain 168).